The sequence spans 371 residues: Aldose sugar dehydrogenase YliI (371 aa).

Residues 1–20 (MHRQSFFLVPLICLSSALWA) form the signal peptide. Residue glutamine 82 participates in pyrroloquinoline quinone binding. Histidine 147 serves as the catalytic Proton acceptor. The segment at 214–215 (RN) is PQQ. Ca(2+)-binding residues include glutamate 240 and tyrosine 250. Tyrosine 261 is a pyrroloquinoline quinone binding site. PQQ regions lie at residues 312-314 (ALK) and 341-343 (RIR).

Belongs to the PQQ oxidoreductase GdhB family. Monomer. The cofactor is Ca(2+). Pyrroloquinoline quinone serves as cofactor.

It localises to the cell outer membrane. Its function is as follows. Aldose sugar dehydrogenase with broad substrate specificity. The physiological substrate is unknown. Can oxidize glucose to gluconolactone. Can also utilize D-arabinose, L-arabinose and 2-deoxy-glucose. Has higher activity towards oligomeric sugars, such as maltose, maltotriose or cellobiose. It may function to input sugar-derived electrons into the respiratory network. This chain is Aldose sugar dehydrogenase YliI (yliI), found in Escherichia coli (strain K12).